Here is a 539-residue protein sequence, read N- to C-terminus: Chaperonin GroEL (539 aa).

Residues 29–32, 86–90, Gly-413, 477–479, and Asp-493 each bind ATP; these read TLGP, DGTTT, and DAL.

Belongs to the chaperonin (HSP60) family. In terms of assembly, forms a cylinder of 14 subunits composed of two heptameric rings stacked back-to-back. Interacts with the co-chaperonin GroES.

The protein resides in the cytoplasm. The enzyme catalyses ATP + H2O + a folded polypeptide = ADP + phosphate + an unfolded polypeptide.. In terms of biological role, together with its co-chaperonin GroES, plays an essential role in assisting protein folding. The GroEL-GroES system forms a nano-cage that allows encapsulation of the non-native substrate proteins and provides a physical environment optimized to promote and accelerate protein folding. The protein is Chaperonin GroEL of Clostridium perfringens (strain 13 / Type A).